A 239-amino-acid chain; its full sequence is 2,3,4,5-tetrahydropyridine-2,6-dicarboxylate N-acetyltransferase (239 aa).

Belongs to the transferase hexapeptide repeat family. DapH subfamily.

It catalyses the reaction (S)-2,3,4,5-tetrahydrodipicolinate + acetyl-CoA + H2O = L-2-acetamido-6-oxoheptanedioate + CoA. It participates in amino-acid biosynthesis; L-lysine biosynthesis via DAP pathway; LL-2,6-diaminopimelate from (S)-tetrahydrodipicolinate (acetylase route): step 1/3. In terms of biological role, catalyzes the transfer of an acetyl group from acetyl-CoA to tetrahydrodipicolinate. The chain is 2,3,4,5-tetrahydropyridine-2,6-dicarboxylate N-acetyltransferase from Staphylococcus aureus (strain MRSA252).